The primary structure comprises 252 residues: Small ribosomal subunit protein uS3 (252 aa).

The KH type-2 domain maps to 39-109 (IRNYVQTRLK…EVKIDVVEVV (71 aa)). Positions 221 to 241 (EMKRIKERRSDSGPRSRNDRS) are enriched in basic and acidic residues. The disordered stretch occupies residues 221–252 (EMKRIKERRSDSGPRSRNDRSQKRRRRPNDRG). Over residues 242–252 (QKRRRRPNDRG) the composition is skewed to basic residues.

This sequence belongs to the universal ribosomal protein uS3 family. In terms of assembly, part of the 30S ribosomal subunit. Forms a tight complex with proteins S10 and S14.

Functionally, binds the lower part of the 30S subunit head. Binds mRNA in the 70S ribosome, positioning it for translation. This chain is Small ribosomal subunit protein uS3, found in Chlorobium luteolum (strain DSM 273 / BCRC 81028 / 2530) (Pelodictyon luteolum).